We begin with the raw amino-acid sequence, 408 residues long: UPF0761 membrane protein azo3165 (408 aa).

A run of 7 helical transmembrane segments spans residues 29–49, 92–112, 131–151, 172–192, 197–217, 220–240, and 241–261; these read LAFTTLLALVPLLTVAIGVFG, LTLIGTAMLAVTALMLLATIE, ITVSWFMLTLGPVILGGSVVA, IAAATLPPLLLGALFSFLYYA, PVRLLHALAGGLCAALVFLLM, GLGLFIAGFPTYTLIYGTFAA, and LPIFLLWLYLSWTVILLGALI.

It belongs to the UPF0761 family.

It is found in the cell inner membrane. The polypeptide is UPF0761 membrane protein azo3165 (Azoarcus sp. (strain BH72)).